The sequence spans 317 residues: MRIVFMGTPDFAATSLKALIDAGQQVVAVVTQPDKPKGRGRQVQPPPVKVLANEYKIPVLQPTSIKINEFQQTIEELKPECIVVVAYGKILPTEILELPPKGCINVHASLLPYYRGSAPIHWAIINGEEETGVTTMFMDKGMDTGDMILKSSVSIGPSDTVGAIHDKLASDGAKLLIETIHLLEEDCAPRIPQNHKLATYAPMLRKEHELIHWDLSAKDIHNHVRGMNPWPGTYTIWDNKILKIWQTTIPAHQNIDADPGTVLEVSPSGILVQTAGGQILIKELQLQGSRRMEVTEFLRGKQMSPGTVLGFEGGRGN.

Residue 109-112 (SLLP) participates in (6S)-5,6,7,8-tetrahydrofolate binding.

The protein belongs to the Fmt family.

It catalyses the reaction L-methionyl-tRNA(fMet) + (6R)-10-formyltetrahydrofolate = N-formyl-L-methionyl-tRNA(fMet) + (6S)-5,6,7,8-tetrahydrofolate + H(+). Attaches a formyl group to the free amino group of methionyl-tRNA(fMet). The formyl group appears to play a dual role in the initiator identity of N-formylmethionyl-tRNA by promoting its recognition by IF2 and preventing the misappropriation of this tRNA by the elongation apparatus. In Desulforamulus reducens (strain ATCC BAA-1160 / DSM 100696 / MI-1) (Desulfotomaculum reducens), this protein is Methionyl-tRNA formyltransferase.